We begin with the raw amino-acid sequence, 304 residues long: Putative S-adenosyl-L-methionine-dependent methyltransferase MAV_4444 (304 aa).

S-adenosyl-L-methionine contacts are provided by residues D130 and 159–160 (DL).

The protein belongs to the UPF0677 family.

In terms of biological role, exhibits S-adenosyl-L-methionine-dependent methyltransferase activity. In Mycobacterium avium (strain 104), this protein is Putative S-adenosyl-L-methionine-dependent methyltransferase MAV_4444.